The chain runs to 236 residues: Protein Thf1 (236 aa).

Residues 180-220 (PVEKMQKDLEQYRSNLEKMTQARKTLEDIVAAERKRRQQNA) adopt a coiled-coil conformation. The disordered stretch occupies residues 206–236 (EDIVAAERKRRQQNAAPDRSPESASATEAPN). Residues 227–236 (ESASATEAPN) are compositionally biased toward polar residues.

It belongs to the THF1 family.

May be involved in photosynthetic membrane biogenesis. The chain is Protein Thf1 from Cyanothece sp. (strain PCC 7425 / ATCC 29141).